The sequence spans 277 residues: Inositol monophosphatase 1 (277 aa).

The Mg(2+) site is built by Glu70, Asp90, Ile92, and Asp93. Glu70 contacts substrate. Substrate-binding positions include 92-95, 194-196, Glu213, and Asp220; these read IDGT and GTA. Residue Asp220 participates in Mg(2+) binding.

Belongs to the inositol monophosphatase superfamily. Homodimer. Mg(2+) serves as cofactor. Ubiquitous.

Its subcellular location is the cytoplasm. The enzyme catalyses a myo-inositol phosphate + H2O = myo-inositol + phosphate. It carries out the reaction 1D-myo-inositol 1-phosphate + H2O = myo-inositol + phosphate. It catalyses the reaction 1D-myo-inositol 2-phosphate + H2O = myo-inositol + phosphate. The catalysed reaction is 1D-myo-inositol 3-phosphate + H2O = myo-inositol + phosphate. The enzyme catalyses 1D-myo-inositol 4-phosphate + H2O = myo-inositol + phosphate. It carries out the reaction 1D-myo-inositol 5-phosphate + H2O = myo-inositol + phosphate. It catalyses the reaction 1D-myo-inositol 6-phosphate + H2O = myo-inositol + phosphate. The catalysed reaction is scyllo-inositol 1-phosphate + H2O = scyllo-inositol + phosphate. The enzyme catalyses alpha-D-galactose 1-phosphate + H2O = D-galactose + phosphate. It carries out the reaction alpha-D-glucose 1-phosphate + H2O = D-glucose + phosphate. It catalyses the reaction D-glucose 6-phosphate + H2O = D-glucose + phosphate. The catalysed reaction is beta-D-fructose 1-phosphate + H2O = D-fructose + phosphate. The enzyme catalyses glycerol 2-phosphate + H2O = glycerol + phosphate. It carries out the reaction adenosine 2'-phosphate + H2O = adenosine + phosphate. It participates in polyol metabolism; myo-inositol biosynthesis; myo-inositol from D-glucose 6-phosphate: step 2/2. With respect to regulation, activity with myo-inositol monophosphate and D-galactose 1-phosphate is inhibited by Li(+), Ca(2+) and Mn(2+), but also by Mg(2+) at concentrations above 3 mM. Its function is as follows. Phosphatase involved in the dephosphorylation of myo-inositol monophosphate to generate myo-inositol. Is also able to dephosphorylate scyllo-inositol-phosphate, myo-inositol 1,4-diphosphate, scyllo-inositol-1,3-diphosphate and scyllo-inositol-1,4-diphosphate. Also dephosphorylates in vitro other sugar-phosphates including D-galactose-1-phosphate, glucose-1-phosphate, glucose-6-phosphate, fructose-1-phosphate, beta-glycerophosphate and 2'-AMP. Responsible for the provision of inositol required for synthesis of phosphatidylinositol and polyphosphoinositides, and involved in maintaining normal brain function. Has been implicated as the pharmacological target for lithium Li(+) action in brain. Is equally active with myo-inositol monophosphate and D-galactose 1-phosphate. The sequence is that of Inositol monophosphatase 1 (Impa1) from Rattus norvegicus (Rat).